Consider the following 181-residue polypeptide: Inorganic pyrophosphatase (181 aa).

Residues Lys-16, Arg-30, and Tyr-42 each coordinate substrate. The Mg(2+) site is built by Asp-52, Asp-57, and Asp-89. Tyr-126 serves as a coordination point for substrate.

Belongs to the PPase family. As to quaternary structure, homohexamer. The cofactor is Mg(2+).

It is found in the cytoplasm. The catalysed reaction is diphosphate + H2O = 2 phosphate + H(+). Functionally, catalyzes the hydrolysis of inorganic pyrophosphate (PPi) forming two phosphate ions. The sequence is that of Inorganic pyrophosphatase from Ureaplasma parvum serovar 3 (strain ATCC 700970).